The chain runs to 275 residues: Large ribosomal subunit protein uL2 (275 aa).

Disordered stretches follow at residues 38–59 (KKHA…GGHK) and 222–275 (GSAM…RKQK). Composition is skewed to basic residues over residues 39 to 59 (KHAG…GGHK) and 254 to 275 (MGKK…RKQK).

Belongs to the universal ribosomal protein uL2 family. In terms of assembly, part of the 50S ribosomal subunit. Forms a bridge to the 30S subunit in the 70S ribosome.

Functionally, one of the primary rRNA binding proteins. Required for association of the 30S and 50S subunits to form the 70S ribosome, for tRNA binding and peptide bond formation. It has been suggested to have peptidyltransferase activity; this is somewhat controversial. Makes several contacts with the 16S rRNA in the 70S ribosome. This Herpetosiphon aurantiacus (strain ATCC 23779 / DSM 785 / 114-95) protein is Large ribosomal subunit protein uL2.